A 166-amino-acid chain; its full sequence is NAD(P)H-quinone oxidoreductase subunit I, chloroplastic (166 aa).

4Fe-4S ferredoxin-type domains follow at residues 55–84 (GRIH…VDWK) and 95–124 (LNYS…MTEE). 8 residues coordinate [4Fe-4S] cluster: Cys64, Cys67, Cys70, Cys74, Cys104, Cys107, Cys110, and Cys114.

This sequence belongs to the complex I 23 kDa subunit family. As to quaternary structure, NDH is composed of at least 16 different subunits, 5 of which are encoded in the nucleus. [4Fe-4S] cluster serves as cofactor.

It localises to the plastid. The protein localises to the chloroplast thylakoid membrane. The catalysed reaction is a plastoquinone + NADH + (n+1) H(+)(in) = a plastoquinol + NAD(+) + n H(+)(out). It catalyses the reaction a plastoquinone + NADPH + (n+1) H(+)(in) = a plastoquinol + NADP(+) + n H(+)(out). Functionally, NDH shuttles electrons from NAD(P)H:plastoquinone, via FMN and iron-sulfur (Fe-S) centers, to quinones in the photosynthetic chain and possibly in a chloroplast respiratory chain. The immediate electron acceptor for the enzyme in this species is believed to be plastoquinone. Couples the redox reaction to proton translocation, and thus conserves the redox energy in a proton gradient. The polypeptide is NAD(P)H-quinone oxidoreductase subunit I, chloroplastic (Palafoxia arida (Spanish needles)).